A 293-amino-acid chain; its full sequence is Kallikrein-5 (293 aa).

Positions 1 to 22 are cleaved as a signal peptide; the sequence is MATARPPWMWVLCALITALLLG. The segment covering 37-49 has biased composition (polar residues); sequence HPSNTVPSGSNQD. Residues 37–68 are disordered; that stretch reads HPSNTVPSGSNQDLGAGAGEDARSDDSSSRII. The 224-residue stretch at 67–290 folds into the Peptidase S1 domain; it reads IINGSDCDMH…FTKWIQETIQ (224 aa). N-linked (GlcNAc...) asparagine glycosylation occurs at Asn-69. 6 disulfide bridges follow: Cys-73–Cys-206, Cys-93–Cys-109, Cys-178–Cys-279, Cys-185–Cys-251, Cys-217–Cys-231, and Cys-241–Cys-266. Residues His-108 and Asp-153 each act as charge relay system in the active site. Asn-173 and Asn-208 each carry an N-linked (GlcNAc...) asparagine glycan. Ser-245 acts as the Charge relay system in catalysis. Asn-252 carries N-linked (GlcNAc...) asparagine glycosylation.

The protein belongs to the peptidase S1 family. Kallikrein subfamily. In terms of assembly, interacts with SPINK9. As to expression, expressed in skin, breast, brain and testis. Expressed at the stratum granulosum of palmar skin.

Its subcellular location is the secreted. With respect to regulation, inhibited by Zn2+. May be involved in desquamation. The polypeptide is Kallikrein-5 (Homo sapiens (Human)).